Reading from the N-terminus, the 134-residue chain is MRMLLHLSLLALGAAYVYAIPTEIPTSALVKETLALLSTHRTLLIANETLRIPVPVHKNHQLCTEEIFQGIGTLESQTVQGGTVERLFKNLSLIKKYIDGQKKKCGEERRRVNQFLDYLQEFLGVMNTEWIIES.

The first 19 residues, 1 to 19 (MRMLLHLSLLALGAAYVYA), serve as a signal peptide directing secretion. T22 carries O-linked (GalNAc...) threonine glycosylation. An N-linked (GlcNAc...) asparagine glycan is attached at N47.

The protein belongs to the IL-5 family. Homodimer; disulfide-linked. Interacts with IL5RA. Interacts with CSF2RB. Present in peripheral blood mononuclear cells.

It localises to the secreted. In terms of biological role, homodimeric cytokine expressed predominantly by T-lymphocytes and NK cells that plays an important role in the survival, differentiation, and chemotaxis of eosinophils. Also acts on activated and resting B-cells to induce immunoglobulin production, growth, and differentiation. Mechanistically, exerts its biological effects through a receptor composed of IL5RA subunit and the cytokine receptor common subunit beta/CSF2RB. Binding to the receptor leads to activation of various kinases including LYN, SYK and JAK2 and thereby propagates signals through the RAS-MAPK and JAK-STAT5 pathways respectively. The sequence is that of Interleukin-5 (IL5) from Homo sapiens (Human).